The following is a 76-amino-acid chain: Kappa-scoloptoxin(15)-Ssd3a (76 aa).

Positions 1–23 (MEGKIIFICFLVVLLTLPELISS) are cleaved as a signal peptide.

Contains 2 disulfide bonds. As to expression, expressed by the venom gland.

It localises to the secreted. Its function is as follows. Acts as a voltage-gated potassium channel inhibitor. In Scolopendra dehaani (Thai centipede), this protein is Kappa-scoloptoxin(15)-Ssd3a.